The sequence spans 119 residues: UPF0342 protein GTNG_0551 (119 aa).

It belongs to the UPF0342 family.

This chain is UPF0342 protein GTNG_0551, found in Geobacillus thermodenitrificans (strain NG80-2).